The chain runs to 930 residues: Protein translocase subunit SecA (930 aa).

ATP-binding positions include Gln-87, 105–109 (GEGKT), and Asp-515. Positions 914, 916, 925, and 926 each coordinate Zn(2+).

It belongs to the SecA family. Monomer and homodimer. Part of the essential Sec protein translocation apparatus which comprises SecA, SecYEG and auxiliary proteins SecDF-YajC and YidC. Zn(2+) serves as cofactor.

The protein resides in the cell inner membrane. The protein localises to the cytoplasm. The enzyme catalyses ATP + H2O + cellular proteinSide 1 = ADP + phosphate + cellular proteinSide 2.. Part of the Sec protein translocase complex. Interacts with the SecYEG preprotein conducting channel. Has a central role in coupling the hydrolysis of ATP to the transfer of proteins into and across the cell membrane, serving both as a receptor for the preprotein-SecB complex and as an ATP-driven molecular motor driving the stepwise translocation of polypeptide chains across the membrane. The polypeptide is Protein translocase subunit SecA (Cupriavidus metallidurans (strain ATCC 43123 / DSM 2839 / NBRC 102507 / CH34) (Ralstonia metallidurans)).